The primary structure comprises 141 residues: Large-conductance mechanosensitive channel (141 aa).

Helical transmembrane passes span 16-36 (VIDL…VDSV), 40-60 (LIMP…MFIV), and 86-106 (GNFL…FLMV).

The protein belongs to the MscL family. As to quaternary structure, homopentamer.

The protein localises to the cell inner membrane. Its function is as follows. Channel that opens in response to stretch forces in the membrane lipid bilayer. May participate in the regulation of osmotic pressure changes within the cell. In Cupriavidus necator (strain ATCC 17699 / DSM 428 / KCTC 22496 / NCIMB 10442 / H16 / Stanier 337) (Ralstonia eutropha), this protein is Large-conductance mechanosensitive channel.